A 245-amino-acid chain; its full sequence is 1-(5-phosphoribosyl)-5-[(5-phosphoribosylamino)methylideneamino] imidazole-4-carboxamide isomerase (245 aa).

The Proton acceptor role is filled by D7. D129 serves as the catalytic Proton donor.

It belongs to the HisA/HisF family.

The protein localises to the cytoplasm. It catalyses the reaction 1-(5-phospho-beta-D-ribosyl)-5-[(5-phospho-beta-D-ribosylamino)methylideneamino]imidazole-4-carboxamide = 5-[(5-phospho-1-deoxy-D-ribulos-1-ylimino)methylamino]-1-(5-phospho-beta-D-ribosyl)imidazole-4-carboxamide. Its pathway is amino-acid biosynthesis; L-histidine biosynthesis; L-histidine from 5-phospho-alpha-D-ribose 1-diphosphate: step 4/9. The polypeptide is 1-(5-phosphoribosyl)-5-[(5-phosphoribosylamino)methylideneamino] imidazole-4-carboxamide isomerase (Shewanella sp. (strain MR-4)).